The following is a 58-amino-acid chain: Small ribosomal subunit protein bS21 (58 aa).

Over residues 32 to 42 (IRKREHYEKPS) the composition is skewed to basic and acidic residues. Positions 32 to 58 (IRKREHYEKPSVRRKKKSEAARKRKFN) are disordered. A compositionally biased stretch (basic residues) spans 43 to 58 (VRRKKKSEAARKRKFN).

The protein belongs to the bacterial ribosomal protein bS21 family.

This Lachnospira eligens (strain ATCC 27750 / DSM 3376 / VPI C15-48 / C15-B4) (Eubacterium eligens) protein is Small ribosomal subunit protein bS21.